Here is a 429-residue protein sequence, read N- to C-terminus: Adenylosuccinate synthetase (429 aa).

Residues 12–18 (GDEGKGK) and 40–42 (GHT) contribute to the GTP site. Asp13 functions as the Proton acceptor in the catalytic mechanism. Residues Asp13 and Gly40 each coordinate Mg(2+). Residues 13-16 (DEGK), 38-41 (NAGH), Thr129, Arg143, Gln223, Thr238, and Arg302 contribute to the IMP site. His41 serves as the catalytic Proton donor. 298–304 (VVTGRKR) contacts substrate. GTP-binding positions include Arg304, 330–332 (KLD), and 412–414 (STS).

It belongs to the adenylosuccinate synthetase family. Homodimer. Mg(2+) is required as a cofactor.

The protein resides in the cytoplasm. The enzyme catalyses IMP + L-aspartate + GTP = N(6)-(1,2-dicarboxyethyl)-AMP + GDP + phosphate + 2 H(+). It functions in the pathway purine metabolism; AMP biosynthesis via de novo pathway; AMP from IMP: step 1/2. Plays an important role in the de novo pathway of purine nucleotide biosynthesis. Catalyzes the first committed step in the biosynthesis of AMP from IMP. The chain is Adenylosuccinate synthetase from Brucella suis (strain ATCC 23445 / NCTC 10510).